Here is a 578-residue protein sequence, read N- to C-terminus: Tetratricopeptide repeat protein ttc-39B (578 aa).

TPR repeat units lie at residues Ala-297 to Tyr-330, Cys-481 to Ile-514, and Pro-522 to Tyr-554.

The protein is Tetratricopeptide repeat protein ttc-39B of Caenorhabditis elegans.